We begin with the raw amino-acid sequence, 333 residues long: Geminin coiled-coil domain-containing protein 1 (333 aa).

Residues 83–118 adopt a coiled-coil conformation; the sequence is QLYRNKQLQDTLLQKEEELARLHEENNHLRQYLNST. Positions 145 to 154 are enriched in basic residues; the sequence is KEKRKPKEHR. Positions 145 to 165 are disordered; sequence KEKRKPKEHRHSPAEIPQFKT.

Belongs to the GEMC1 family. In terms of processing, highly phosphorylated by CDK2; stimulates initiation of DNA replication.

The protein localises to the nucleus. In terms of biological role, regulator of DNA replication. Promotes initiation of chromosomal DNA replication by mediating TOPBP1- and CDK2-dependent recruitment of CDC45L onto replication origins. This Mus musculus (Mouse) protein is Geminin coiled-coil domain-containing protein 1 (Gmnc).